The primary structure comprises 133 residues: Small ribosomal subunit protein uS9 (133 aa).

A compositionally biased stretch (basic and acidic residues) spans 98–113 (RKPLKTEGHLSRDPRA). Residues 98-133 (RKPLKTEGHLSRDPRAKERRKYGLKKARKAPQFSKR) form a disordered region. A compositionally biased stretch (basic residues) spans 114-133 (KERRKYGLKKARKAPQFSKR).

This sequence belongs to the universal ribosomal protein uS9 family.

The protein is Small ribosomal subunit protein uS9 of Parasynechococcus marenigrum (strain WH8102).